The following is a 441-amino-acid chain: Cysteine--tRNA ligase (441 aa).

Residue cysteine 24 coordinates Zn(2+). The 'HIGH' region signature appears at 26 to 36 (PTVYNYIHIGN). Residues cysteine 204, histidine 230, and glutamate 234 each contribute to the Zn(2+) site. The 'KMSKS' region signature appears at 262 to 266 (KMSKS). Residue lysine 265 participates in ATP binding.

It belongs to the class-I aminoacyl-tRNA synthetase family. In terms of assembly, monomer. Zn(2+) serves as cofactor.

The protein localises to the cytoplasm. It carries out the reaction tRNA(Cys) + L-cysteine + ATP = L-cysteinyl-tRNA(Cys) + AMP + diphosphate. In Mycoplasma capricolum subsp. capricolum (strain California kid / ATCC 27343 / NCTC 10154), this protein is Cysteine--tRNA ligase.